The following is a 213-amino-acid chain: NADH dehydrogenase [ubiquinone] iron-sulfur protein 7, mitochondrial (213 aa).

Residues 1-37 (MAVLSAPGLRGFRILGLRSSVGPAVQARSVHQSVATD) constitute a mitochondrion transit peptide. Over residues 30–44 (VHQSVATDGPSSTQP) the composition is skewed to polar residues. A disordered region spans residues 30–53 (VHQSVATDGPSSTQPALPKARAVA). Residues Cys88 and Cys89 each contribute to the [4Fe-4S] cluster site. Residue Arg111 is modified to Hydroxyarginine. [4Fe-4S] cluster contacts are provided by Cys153 and Cys183.

This sequence belongs to the complex I 20 kDa subunit family. Core subunit of respiratory chain NADH dehydrogenase (Complex I) which is composed of 45 different subunits. This is a component of the iron-sulfur (IP) fragment of the enzyme. It depends on [4Fe-4S] cluster as a cofactor. Post-translationally, hydroxylated ar Arg-111 by NDUFAF5 early in the pathway of assembly of complex I, before the formation of the juncture between peripheral and membrane arms.

It localises to the mitochondrion inner membrane. It catalyses the reaction a ubiquinone + NADH + 5 H(+)(in) = a ubiquinol + NAD(+) + 4 H(+)(out). Functionally, core subunit of the mitochondrial membrane respiratory chain NADH dehydrogenase (Complex I) which catalyzes electron transfer from NADH through the respiratory chain, using ubiquinone as an electron acceptor. Essential for the catalytic activity of complex I. The polypeptide is NADH dehydrogenase [ubiquinone] iron-sulfur protein 7, mitochondrial (NDUFS7) (Pan troglodytes (Chimpanzee)).